The primary structure comprises 224 residues: UPF0758 protein BPUM_2444 (224 aa).

Residues 102–224 form the MPN domain; the sequence is VIRTPEDGAN…FVSLKEKGYL (123 aa). Residues histidine 173, histidine 175, and aspartate 186 each contribute to the Zn(2+) site. Positions 173–186 match the JAMM motif motif; it reads HNHPSGDPTPSRED.

This sequence belongs to the UPF0758 family.

The sequence is that of UPF0758 protein BPUM_2444 from Bacillus pumilus (strain SAFR-032).